Here is a 206-residue protein sequence, read N- to C-terminus: Ribosomal RNA small subunit methyltransferase G (206 aa).

S-adenosyl-L-methionine-binding positions include Gly73, Leu78, Val124–Glu125, and Arg139.

It belongs to the methyltransferase superfamily. RNA methyltransferase RsmG family.

Its subcellular location is the cytoplasm. The catalysed reaction is guanosine(527) in 16S rRNA + S-adenosyl-L-methionine = N(7)-methylguanosine(527) in 16S rRNA + S-adenosyl-L-homocysteine. Functionally, specifically methylates the N7 position of guanine in position 527 of 16S rRNA. This is Ribosomal RNA small subunit methyltransferase G from Yersinia enterocolitica serotype O:8 / biotype 1B (strain NCTC 13174 / 8081).